The following is a 2431-amino-acid chain: Nucleoprotein TPR (2431 aa).

Residues 1-48 form a disordered region; sequence MTSGGSASRSGHRGVPMTSRGFDGSRRGSLRRAGARETASEAADGAAP. The interval 77 to 87 is sufficient for interaction with TPR; it reads AVLQQVLERPE. A necessary for interaction with HSF1 region spans residues 88–191; that stretch reads LNKLPKSTQN…GIQSQFTRAK (104 aa). Residues 98 to 444 adopt a coiled-coil conformation; it reads KLEKFLAEQQ…SATKRKGAIL (347 aa). N6-acetyllysine is present on residues lysine 326, lysine 386, and lysine 419. Serine 453 is modified (phosphoserine). The stretch at 486–678 forms a coiled coil; sequence EKQENKRINK…ESRQHQMQLV (193 aa). N6-acetyllysine occurs at positions 502, 531, and 551. The tract at residues 511–587 is necessary for association to the NPC; sequence LKRQREEYER…LMELEEARGN (77 aa). Phosphoserine occurs at positions 596, 597, and 706. Residues 736 to 1246 are a coiled coil; that stretch reads STEAIEAKAA…IEKLSDKVVT (511 aa). An N6-acetyllysine mark is found at lysine 787, lysine 797, lysine 822, and lysine 829. A compositionally biased stretch (polar residues) spans 989-998; that stretch reads LASQSTQRTG. Positions 989–1011 are disordered; it reads LASQSTQRTGKGQPGDRDDVDDL. Residues 1002 to 1011 are compositionally biased toward basic and acidic residues; it reads PGDRDDVDDL. The residue at position 1259 (serine 1259) is a Phosphoserine. 2 coiled-coil regions span residues 1289 to 1494 and 1547 to 1700; these read EVAQ…LDAK and VQEM…QRDE. The segment at 1292–1394 is necessary for interaction with HSF1; it reads QVESLRYRQR…NAELSEKSGM (103 aa). The span at 1689–1701 shows a compositional bias: basic and acidic residues; sequence EHQERHLEQRDEP. The tract at residues 1689–1744 is disordered; sequence EHQERHLEQRDEPQEPTNKAPEQQRQITLKTTPASGERGIASTSDPPTANIKPTPV. Positions 1703–1722 are enriched in polar residues; the sequence is EPTNKAPEQQRQITLKTTPA. At lysine 1760 the chain carries N6-acetyllysine. Position 1762 is a phosphothreonine (threonine 1762). Polar residues predominate over residues 1873-1898; it reads SSPVERPSTSTAVFGTVSATPSSSLP. Residues 1873-2193 are disordered; the sequence is SSPVERPSTS…TPGIGGMQQH (321 aa). Positions 1882–1937 are sufficient and essential for mediating its nuclear import; it reads STAVFGTVSATPSSSLPKRTREEEEDSTMEAGDQVSEDTVEMPLPKKLKMVTPVGT. Residues 1937 to 1951 are compositionally biased toward acidic residues; it reads TEEEVMAEESTDGEA. A compositionally biased stretch (polar residues) spans 1954–1963; that stretch reads QAYNQDSQDS. The residue at position 1963 (serine 1963) is a Phosphoserine. The segment covering 1994-2005 has biased composition (low complexity); that stretch reads QSDQQTTSSQDG. 2 stretches are compositionally biased toward acidic residues: residues 2016–2057 and 2067–2088; these read DSDD…EDSN and DGYEADDAEGGDGTDPGTETEE. Positions 2100–2132 are enriched in polar residues; sequence ADSQNSGEGNTSAAESSFSQEVAREQQPTSASE. 5 positions are modified to phosphoserine: serine 2102, serine 2105, serine 2116, serine 2118, and serine 2141. Arginine 2174 and arginine 2179 each carry omega-N-methylarginine. Threonine 2184 and threonine 2205 each carry phosphothreonine. Position 2223 is a phosphoserine (serine 2223). Arginine 2231 carries the post-translational modification Omega-N-methylarginine. The segment covering 2295-2312 has biased composition (polar residues); sequence ESTTSDASEHASQSVPMV. The interval 2295 to 2431 is disordered; that stretch reads ESTTSDASEH…RGGINRGNIN (137 aa). Positions 2313–2325 are enriched in low complexity; sequence TTSTGTLSTTNET. Acidic residues predominate over residues 2327 to 2340; sequence AGDDGDEVFVEAES. The span at 2341 to 2351 shows a compositional bias: low complexity; sequence EGISSEAGLEI. Residues 2353–2367 show a composition bias toward acidic residues; the sequence is SQQEEEPVQASDESD. Positions 2368 to 2388 are enriched in low complexity; sequence LPSTSQDPPSSSSVDTSSSQP. Arginine 2411, arginine 2413, and arginine 2422 each carry asymmetric dimethylarginine. A compositionally biased stretch (gly residues) spans 2420–2431; the sequence is GGRGGINRGNIN.

The protein belongs to the TPR family. Homodimer. Part of the nuclear pore complex (NPC). Associates with the XPO1/CRM1-mediated nuclear export complex, the Importin alpha/Importin beta receptor and the dynein 1 complex. Interacts (via C-terminal domain) with the KPNB1; the interaction occurs in a RanGTP-dependent manner. Interacts (via C-terminal region and phosphorylated form) with MAPK1/ERK2 (via phosphorylated form); the interaction requires dimerization of MAPK1/ERK2 and increases following EGF stimulation. Interacts with MAPK3/ERK1; the interaction increases following EGF stimulation. Interacts (via coiled coil region) with NUP153; the interaction is direct. Interacts with HSF1; the interaction increases in a stress-responsive manner and stimulates export of stress-induced HSP70 mRNA. Interacts with huntingtin/HTT; the interaction is inhibited by aggregated huntingtin/HTT forms with expanded polyglutamine stretch. Interacts with MAD1L1 (via N-terminal region), MAD2L1, and TTK; the interactions occurs in a microtubule-independent manner. Interacts (via middle region) with DYNLL1. Interacts with DCTN1, dynein, NUP153 and tubulin. Interacts with MTA1. Interacts with IFI204 (via C-terminal region). Interacts with IFI203. Interacts with ZC3HC1; this interaction mediates ZC3HC1 nuclear envelopes (NE)-association but also required for proper positioning of a substantial amount of TPR at the nuclear basket (NB). In terms of processing, phosphorylated. Phosphorylation occurs on serine and threonine residues (comprised in the C-terminal region) by MAPK1/ERK2 and stabilizes the interaction between these two proteins. In terms of tissue distribution, expressed in the heart, liver, kidney, spleen, lung and skeletal muscles.

It localises to the nucleus. The protein localises to the nucleus membrane. The protein resides in the nucleus envelope. It is found in the nuclear pore complex. Its subcellular location is the cytoplasm. It localises to the cytoskeleton. The protein localises to the spindle. The protein resides in the chromosome. It is found in the centromere. Its subcellular location is the kinetochore. In terms of biological role, component of the nuclear pore complex (NPC), a complex required for the trafficking across the nuclear envelope. Functions as a scaffolding element in the nuclear phase of the NPC essential for normal nucleocytoplasmic transport of proteins and mRNAs, plays a role in the establishment of nuclear-peripheral chromatin compartmentalization in interphase, and in the mitotic spindle checkpoint signaling during mitosis. Involved in the quality control and retention of unspliced mRNAs in the nucleus; in association with NUP153, regulates the nuclear export of unspliced mRNA species bearing constitutive transport element (CTE) in a NXF1- and KHDRBS1-independent manner. Negatively regulates both the association of CTE-containing mRNA with large polyribosomes and translation initiation. Does not play any role in Rev response element (RRE)-mediated export of unspliced mRNAs. Implicated in nuclear export of mRNAs transcribed from heat shock gene promoters; associates both with chromatin in the HSP70 promoter and with mRNAs transcribed from this promoter under stress-induced conditions. Plays a limited role in the regulation of nuclear protein export. Modulates the nucleocytoplasmic transport of activated MAPK1/ERK2 and huntingtin/HTT and may serve as a docking site for the XPO1/CRM1-mediated nuclear export complex. Also plays a role as a structural and functional element of the perinuclear chromatin distribution; involved in the formation and/or maintenance of NPC-associated perinuclear heterochromatin exclusion zones (HEZs). Finally, acts as a spatial regulator of the spindle-assembly checkpoint (SAC) response ensuring a timely and effective recruitment of spindle checkpoint proteins like MAD1L1 and MAD2L1 to unattached kinetochore during the metaphase-anaphase transition before chromosome congression. Its N-terminus is involved in activation of oncogenic kinases. This is Nucleoprotein TPR from Mus musculus (Mouse).